A 403-amino-acid chain; its full sequence is Zinc metalloproteinase nas-8 (403 aa).

A signal peptide spans 1 to 29 (MRRNDLLNNKITIFLSSLSLFVIIIPIYA). The propeptide occupies 30-111 (AEKDLLPPST…DPKNSESLRR (82 aa)). The 196-residue stretch at 112–307 (NGVITGTRKW…LKMNLMYQCS (196 aa)) folds into the Peptidase M12A domain. Cystine bridges form between Cys-154-Cys-306, Cys-176-Cys-195, Cys-338-Cys-372, Cys-345-Cys-365, and Cys-352-Cys-369. His-203 contacts Zn(2+). Residue Glu-204 is part of the active site. 2 residues coordinate Zn(2+): His-207 and His-213. Residues 338 to 372 (CRDRTNLCWRWIDRCKSFFFEQIMKEFCSLSCGYC) form the ShKT domain. Residue Asn-386 is glycosylated (N-linked (GlcNAc...) asparagine).

The cofactor is Zn(2+).

Its subcellular location is the secreted. It catalyses the reaction Hydrolysis of peptide bonds in substrates containing five or more amino acids, preferentially with Ala in P1', and Pro in P2'.. In terms of biological role, metalloprotease. The chain is Zinc metalloproteinase nas-8 (nas-8) from Caenorhabditis elegans.